Consider the following 160-residue polypeptide: NADH-quinone oxidoreductase subunit B (160 aa).

Cys-39, Cys-40, Cys-104, and Cys-135 together coordinate [4Fe-4S] cluster.

This sequence belongs to the complex I 20 kDa subunit family. As to quaternary structure, NDH-1 is composed of 14 different subunits. Subunits NuoB, C, D, E, F, and G constitute the peripheral sector of the complex. Requires [4Fe-4S] cluster as cofactor.

The protein localises to the cell membrane. It carries out the reaction a quinone + NADH + 5 H(+)(in) = a quinol + NAD(+) + 4 H(+)(out). NDH-1 shuttles electrons from NADH, via FMN and iron-sulfur (Fe-S) centers, to quinones in the respiratory chain. The immediate electron acceptor for the enzyme in this species is believed to be a menaquinone. Couples the redox reaction to proton translocation (for every two electrons transferred, four hydrogen ions are translocated across the cytoplasmic membrane), and thus conserves the redox energy in a proton gradient. This chain is NADH-quinone oxidoreductase subunit B, found in Amoebophilus asiaticus (strain 5a2).